The following is a 221-amino-acid chain: Uracil-DNA glycosylase (221 aa).

Asp64 (proton acceptor) is an active-site residue.

Belongs to the uracil-DNA glycosylase (UDG) superfamily. UNG family.

The protein resides in the cytoplasm. The catalysed reaction is Hydrolyzes single-stranded DNA or mismatched double-stranded DNA and polynucleotides, releasing free uracil.. Functionally, excises uracil residues from the DNA which can arise as a result of misincorporation of dUMP residues by DNA polymerase or due to deamination of cytosine. The chain is Uracil-DNA glycosylase from Mycoplasmopsis pulmonis (strain UAB CTIP) (Mycoplasma pulmonis).